Here is a 542-residue protein sequence, read N- to C-terminus: 2,3-bisphosphoglycerate-independent phosphoglycerate mutase (542 aa).

Mn(2+)-binding residues include Asp-24 and Ser-74. Residue Ser-74 is the Phosphoserine intermediate of the active site. Residues His-135, 165 to 166 (RD), Arg-197, Arg-203, 268 to 271 (RPDR), and Lys-341 contribute to the substrate site. Residues Asp-408, His-412, Asp-449, His-450, and His-467 each contribute to the Mn(2+) site.

This sequence belongs to the BPG-independent phosphoglycerate mutase family. In terms of assembly, monomer. The cofactor is Mn(2+).

The enzyme catalyses (2R)-2-phosphoglycerate = (2R)-3-phosphoglycerate. Its pathway is carbohydrate degradation; glycolysis; pyruvate from D-glyceraldehyde 3-phosphate: step 3/5. Its function is as follows. Catalyzes the interconversion of 2-phosphoglycerate and 3-phosphoglycerate. This chain is 2,3-bisphosphoglycerate-independent phosphoglycerate mutase, found in Prochlorococcus marinus (strain NATL1A).